Reading from the N-terminus, the 406-residue chain is Corticosteroid-binding globulin (406 aa).

A signal peptide spans 1 to 22; the sequence is MLLTLYACLLWLSTSGLWTSQA. N-linked (GlcNAc...) asparagine glycans are attached at residues asparagine 95, asparagine 119, and asparagine 223. Residue glutamine 253 participates in cortisol binding. Asparagine 259 carries N-linked (GlcNAc...) asparagine glycosylation. Cortisol is bound by residues glutamine 285 and tryptophan 394.

This sequence belongs to the serpin family.

It is found in the secreted. In terms of biological role, major transport protein for glucocorticoids and progestins in the blood of almost all vertebrate species. The protein is Corticosteroid-binding globulin (Serpina6) of Sus scrofa (Pig).